We begin with the raw amino-acid sequence, 101 residues long: Histone H1-like protein EM6 (101 aa).

Composition is skewed to basic residues over residues alanine 1 to lysine 35 and alanine 58 to arginine 101. The segment at alanine 1–arginine 101 is disordered. Repeat copies occupy residues lysine 3–arginine 4, serine 5–arginine 6, serine 7–arginine 8, and lysine 9–arginine 10. The interval lysine 3–arginine 22 is 10 X 2 AA approximate tandem repeats of [SK]-R. The stretch at serine 11–alanine 12 is one 5; approximate repeat. Repeat copies occupy residues serine 13–arginine 14, lysine 15–arginine 16, serine 17–arginine 18, serine 19–arginine 20, and lysine 21–arginine 22. A globular region spans residues histidine 32 to arginine 65.

In terms of tissue distribution, sperm.

The protein resides in the nucleus. The protein localises to the chromosome. In Ensis minor (Razor shell), this protein is Histone H1-like protein EM6.